The primary structure comprises 686 residues: Eukaryotic translation initiation factor 3 subunit B (686 aa).

Residues 1–29 (MAKKHAGADANDSDYNEEPNFEDPPGFVD) form a disordered region. The segment covering 11 to 21 (NDSDYNEEPNF) has biased composition (acidic residues). In terms of domain architecture, RRM spans 53-137 (SVVVVDNIPK…HTFAVNLFTD (85 aa)). WD repeat units lie at residues 203 to 242 (TRER…KIQK), 289 to 327 (DGMS…LLDL), 330 to 365 (IKIP…TLME), 438 to 480 (EIRE…KPSL), and 526 to 571 (PDHF…IKRT). Positions 590–642 (AEEKQKEIKKNLKKYYAVFEQKDRLRLTRASKELLEKRAQLRETFMEYRNKRI) form a coiled coil.

This sequence belongs to the eIF-3 subunit B family. In terms of assembly, component of the eukaryotic translation initiation factor 3 (eIF-3) complex. The eIF-3 complex interacts with pix. Interacts with mxt.

The protein localises to the cytoplasm. RNA-binding component of the eukaryotic translation initiation factor 3 (eIF-3) complex, which is involved in protein synthesis of a specialized repertoire of mRNAs and, together with other initiation factors, stimulates binding of mRNA and methionyl-tRNAi to the 40S ribosome. The eIF-3 complex specifically targets and initiates translation of a subset of mRNAs involved in cell proliferation. The chain is Eukaryotic translation initiation factor 3 subunit B from Drosophila ananassae (Fruit fly).